Reading from the N-terminus, the 382-residue chain is Chaperone protein DnaJ 2 (382 aa).

Residues 4 to 68 (DYYGLLGVSK…DKRRIVDLGG (65 aa)) enclose the J domain. The CR-type zinc-finger motif lies at 132 to 214 (GVTKQVTVDT…CMGDGRIRAR (83 aa)). Residues C145, C148, C162, C165, C188, C191, C202, and C205 each coordinate Zn(2+). CXXCXGXG motif repeat units lie at residues 145–152 (CDRCQGKG), 162–169 (CDTCGGRG), 188–195 (CPTCRGVG), and 202–209 (CQQCMGDG).

The protein belongs to the DnaJ family. In terms of assembly, homodimer. Interacts with RNase J. It depends on Zn(2+) as a cofactor.

It is found in the cytoplasm. In terms of biological role, participates actively in the response to hyperosmotic and heat shock by preventing the aggregation of stress-denatured proteins and by disaggregating proteins, also in an autonomous, DnaK-independent fashion. Unfolded proteins bind initially to DnaJ; upon interaction with the DnaJ-bound protein, DnaK hydrolyzes its bound ATP, resulting in the formation of a stable complex. GrpE releases ADP from DnaK; ATP binding to DnaK triggers the release of the substrate protein, thus completing the reaction cycle. Several rounds of ATP-dependent interactions between DnaJ, DnaK and GrpE are required for fully efficient folding. Also involved, together with DnaK and GrpE, in the DNA replication of plasmids through activation of initiation proteins. Inhibits the beta-lactamase and RNase activity of RNase J. The polypeptide is Chaperone protein DnaJ 2 (Mycobacterium tuberculosis (strain ATCC 25618 / H37Rv)).